The sequence spans 505 residues: Maturase K (505 aa).

This sequence belongs to the intron maturase 2 family. MatK subfamily.

The protein localises to the plastid. Its subcellular location is the chloroplast. Its function is as follows. Usually encoded in the trnK tRNA gene intron. Probably assists in splicing its own and other chloroplast group II introns. This is Maturase K from Portulacaria afra (Elephant's food).